A 35-amino-acid chain; its full sequence is Tau/kappa-theraphotoxin-Pc1a (35 aa).

3 disulfides stabilise this stretch: C3–C17, C10–C22, and C16–C29. Phenylalanine amide is present on F35.

This sequence belongs to the neurotoxin 10 (Hwtx-1) family. 62 (Vatx) subfamily. Expressed by the venom gland.

It is found in the secreted. In terms of biological role, selectively activates mammalian TRPV1, the capsaicin receptor, a non-selective cation channel expressed by sensory neurons of the pain pathway. Is less potent than VaTx2 and VaTx3. Interacts with distinct regions of the channel than capsaicin, since it only acts on the extracellular face of the channel, and capsaicin binds to the cytosolic side. Also activates avian TRPV1, which is insensitive to capsaicin. Significantly inhibits potassium channels Kv2.1/KCNB1. This is Tau/kappa-theraphotoxin-Pc1a from Psalmopoeus cambridgei (Trinidad chevron tarantula).